A 319-amino-acid polypeptide reads, in one-letter code: Putative olfactory receptor 52L2 (319 aa).

Residues 1 to 43 (MNLDSFFSFLLKSLIMALSNSSWRLPQPSFFLVGIPGLEESQH) are Extracellular-facing. N-linked (GlcNAc...) asparagine glycosylation is present at Asn-20. The helical transmembrane segment at 44–64 (WIALPLGILYLLALVGNVTIL) threads the bilayer. Residues 65 to 72 (FIIWMDPS) are Cytoplasmic-facing. Residues 73–93 (LHQSMYLFLSMLAAIDLVVAS) traverse the membrane as a helical segment. Residues 94–117 (STAPKALAVLLVRAQEIGYTVCLI) lie on the Extracellular side of the membrane. An intrachain disulfide couples Cys-115 to Cys-207. A helical membrane pass occupies residues 118–138 (QMFFTHAFSSMESGVLVAMAL). Topologically, residues 139-157 (DRYVAICHPLHHSTILHPG) are cytoplasmic. Residues 158-178 (VIGHIGMVVLVRGLLLLIPFL) traverse the membrane as a helical segment. Topologically, residues 179–214 (ILLRKLIFCQATIIGHAYCEHMAVVKLACSETTVNR) are extracellular. A helical membrane pass occupies residues 215-235 (AYGLTVALLVVGLDVLAIGVS). The Cytoplasmic portion of the chain corresponds to 236-255 (YAHILQAVLKVPGNEARLKA). Residues 256–276 (FSTCGSHVCVILVFYIPGMFS) traverse the membrane as a helical segment. The Extracellular portion of the chain corresponds to 277-291 (FLTHRFGHHVPHHVH). A helical membrane pass occupies residues 292-312 (VLLAILYRLVPPALNPLVYRV). At 313-319 (KTQKIHQ) the chain is on the cytoplasmic side.

The protein belongs to the G-protein coupled receptor 1 family.

The protein resides in the cell membrane. In terms of biological role, odorant receptor. This chain is Putative olfactory receptor 52L2 (OR52L2P), found in Homo sapiens (Human).